The primary structure comprises 230 residues: Ribosomal RNA large subunit methyltransferase E (230 aa).

The S-adenosyl-L-methionine site is built by G82, W84, D100, D116, and D140. The Proton acceptor role is filled by K180.

It belongs to the class I-like SAM-binding methyltransferase superfamily. RNA methyltransferase RlmE family.

It is found in the cytoplasm. The enzyme catalyses uridine(2552) in 23S rRNA + S-adenosyl-L-methionine = 2'-O-methyluridine(2552) in 23S rRNA + S-adenosyl-L-homocysteine + H(+). Functionally, specifically methylates the uridine in position 2552 of 23S rRNA at the 2'-O position of the ribose in the fully assembled 50S ribosomal subunit. In Granulibacter bethesdensis (strain ATCC BAA-1260 / CGDNIH1), this protein is Ribosomal RNA large subunit methyltransferase E.